Consider the following 198-residue polypeptide: MLKKTLAALAIGSAVLAAGQVMAADYVIDKEGQHAFVDFKISHLGYSFITGTFKDLDGKFSFDAAKPEDAKIEVNVRTASVFTNHAERDKHITSKDFLDAGKFADAKFVSTSVKPTGKNADGKLTADVAGDLTLHGVTKPVVVKATFLGEGKDPWGGYRAGFEGTTSINRQDFGKMMDLGPASNNVDLYISFEGVKAK.

An N-terminal signal peptide occupies residues methionine 1–alanine 23.

Belongs to the UPF0312 family. Type 1 subfamily.

Its subcellular location is the periplasm. This chain is UPF0312 protein PFL_5802, found in Pseudomonas fluorescens (strain ATCC BAA-477 / NRRL B-23932 / Pf-5).